Consider the following 38-residue polypeptide: Potassium channel toxin alpha-KTx 3.12 (38 aa).

Disulfide bonds link Cys-8–Cys-28, Cys-14–Cys-33, and Cys-18–Cys-35. The residue at position 38 (Lys-38) is a Lysine amide.

The protein belongs to the short scorpion toxin superfamily. Potassium channel inhibitor family. Alpha-KTx 03 subfamily. Expressed by the venom gland.

Its subcellular location is the secreted. Functionally, potent inhibitor of voltage-dependent potassium channels, with a preference for Kv1.3/KCNA3 versus Kv1.2/KCNA2. This is Potassium channel toxin alpha-KTx 3.12 from Androctonus amoreuxi (African fattail scorpion).